Consider the following 361-residue polypeptide: Cytochrome c peroxidase, mitochondrial (361 aa).

The transit peptide at 1-67 directs the protein to the mitochondrion; sequence MTTAVRLLPS…NWGKAAALAS (67 aa). H119 (proton acceptor) is an active-site residue. Position 220 is a phosphotyrosine (Y220). H242 is a binding site for heme b. W258 functions as the Tryptophan radical intermediate in the catalytic mechanism.

The protein belongs to the peroxidase family. Cytochrome c peroxidase subfamily. As to quaternary structure, forms a one-to-one complex with cytochrome c. Heme b serves as cofactor. CCP1 precursor is processed by the rhomboid protease PCP1, which cleaves the N-terminal hydrophobic transit peptide. The m-AAA protease (composed of YTA12/RCA1 and YTA10/AFG3) is required for CCP1 maturation: m-AAA protease promotes membrane dislocation of the CCP1 transmembrane segment within the transit peptide to ensure the correct positioning of CCP1 within the membrane bilayer, allowing intramembrane cleavage by PCP1.

It is found in the mitochondrion matrix. The protein resides in the mitochondrion intermembrane space. The catalysed reaction is 2 Fe(II)-[cytochrome c] + H2O2 + 2 H(+) = 2 Fe(III)-[cytochrome c] + 2 H2O. Destroys radicals which are normally produced within the cells and which are toxic to biological systems. The sequence is that of Cytochrome c peroxidase, mitochondrial (CCP1) from Saccharomyces cerevisiae (strain ATCC 204508 / S288c) (Baker's yeast).